Here is a 624-residue protein sequence, read N- to C-terminus: Kelch-like ECH-associated protein 1 (624 aa).

A disordered region spans residues 1–27 (MQPEPRPSGAGAHTQFLPLRSQRPEGA). The residue at position 38 (cysteine 38) is an S-(2-succinyl)cysteine. One can recognise a BTB domain in the interval 77–149 (CDVTLQVKYE…AYTASISMGE (73 aa)). Arginine 135 participates in a covalent cross-link: N5-[4-(S-L-cysteinyl)-5-methyl-1H-imidazol-2-yl]-L-ornithine (Arg-Cys) (interchain with C-151 in KEAP1). Cysteine 151 and cysteine 241 each carry S-(2-succinyl)cysteine. S-(2,3-dicarboxypropyl)cysteine; alternate is present on cysteine 151. S-nitrosocysteine; alternate is present on cysteine 151. Cysteine 151 participates in a covalent cross-link: N5-[4-(S-L-cysteinyl)-5-methyl-1H-imidazol-2-yl]-L-ornithine (Cys-Arg) (interchain with R-135 in KEAP1). One can recognise a BACK domain in the interval 184–286 (AIGIANFAEQ…TPHFLQMQLQ (103 aa)). S-(2,3-dicarboxypropyl)cysteine occurs at positions 257 and 273. S-(2-succinyl)cysteine occurs at positions 288 and 319. Cysteine 288 is modified (S-(2,3-dicarboxypropyl)cysteine; alternate). Kelch repeat units lie at residues 327-372 (LIYT…VVGG), 373-423 (LLYA…VIDG), 424-470 (HIYA…VLNR), 471-517 (LLYA…VLHN), 519-564 (IYAA…VHQG), and 565-611 (RIYV…VTME). Position 434 is an S-cGMP-cysteine (cysteine 434). An S-(2-succinyl)cysteine modification is found at cysteine 613.

The protein belongs to the KEAP1 family. As to quaternary structure, component of the BCR(KEAP1) E3 ubiquitin ligase complex, at least composed of 2 molecules of CUL3, 2 molecules of KEAP1, and RBX1. Interacts with NFE2L2/NRF2; the interaction is direct. Forms a ternary complex with NFE2L2/NRF2 and PGAM5. Interacts with (phosphorylated) SQSTM1/p62; the interaction is direct and inactivates the BCR(KEAP1) complex by sequestering it in inclusion bodies, promoting its degradation. Interacts with NFE2L1. Interacts with BPTF and PTMA. Interacts with MAP1LC3B. Interacts indirectly with ENC1. Interacts with SESN1 and SESN2. Interacts with HSP90AA1 and HSP90AB1. Interacts with PGCKA1; this interaction prevents the ubiquitination of KEAP1 by TRIM25, thus protecting KEAP1 protein from degradation. In terms of processing, non-enzymatic covalent modifications of reactive cysteines by electrophile metabolites inactivate the BCR(KEAP1) complex. Accumulation of fumarate promotes the formation of cysteine S-succination (S-(2-succinyl)cysteine), leading to inactivate the BCR(KEAP1) complex and promote NFE2L2/NRF2 nuclear accumulation and activation. Nitric oxide-dependent 8-Nitro-cGMP formation promotes cysteine guanylation (S-cGMP-cysteine), leading to NFE2L2/NRF2 nuclear accumulation and activation. Itaconate, an anti-inflammatory metabolite generated in response to lipopolysaccharide, alkylates cysteines, activating NFE2L2/NRF2. Methylglyoxal, a reactive metabolite that accumulates when the glycolytic enzyme PGK1 is inhibited, promotes formation of a methylimidazole cross-link between proximal Cys-151 and Arg-135 on another KEAP1 molecule, resulting in an inactive dimer that inactivates the BCR(KEAP1) complex. Degraded via a proteasomal-independent process during selective autophagy: interaction with phosphorylated SQSTM1/p62 sequesters KEAP1 in inclusion bodies, leading to its degradation. Post-translationally, auto-ubiquitinated by the BCR(KEAP1) complex. Quinone-induced oxidative stress, but not sulforaphane, increases its ubiquitination. Ubiquitination and subsequent degradation is most pronounced following prolonged exposure of cells to oxidative stress, particularly in glutathione-deficient cells that are highly susceptible to oxidative stress. Deubiquitinated by USP25; leading to stabilization. Ubiquitinated by TRIM25; leading to degradation upon ER stress.

Its subcellular location is the cytoplasm. The protein resides in the nucleus. It functions in the pathway protein modification; protein ubiquitination. Ubiquitin ligase activity of the BCR(KEAP1) complex is inhibited by oxidative stress and electrophile metabolites such as sulforaphane. Electrophile metabolites react with reactive cysteine residues in KEAP1 and trigger non-enzymatic covalent modifications of these cysteine residues, leading to inactivate the ubiquitin ligase activity of the BCR(KEAP1) complex. Selective autophagy also inactivates the BCR(KEAP1) complex via interaction between KEAP1 and SQSTM1/p62, which sequesters the complex in inclusion bodies and promotes its degradation. Its function is as follows. Substrate-specific adapter of a BCR (BTB-CUL3-RBX1) E3 ubiquitin ligase complex that regulates the response to oxidative stress by targeting NFE2L2/NRF2 for ubiquitination. KEAP1 acts as a key sensor of oxidative and electrophilic stress: in normal conditions, the BCR(KEAP1) complex mediates ubiquitination and degradation of NFE2L2/NRF2, a transcription factor regulating expression of many cytoprotective genes. In response to oxidative stress, different electrophile metabolites trigger non-enzymatic covalent modifications of highly reactive cysteine residues in KEAP1, leading to inactivate the ubiquitin ligase activity of the BCR(KEAP1) complex, promoting NFE2L2/NRF2 nuclear accumulation and expression of phase II detoxifying enzymes. In response to selective autophagy, KEAP1 is sequestered in inclusion bodies following its interaction with SQSTM1/p62, leading to inactivation of the BCR(KEAP1) complex and activation of NFE2L2/NRF2. The BCR(KEAP1) complex also mediates ubiquitination of SQSTM1/p62, increasing SQSTM1/p62 sequestering activity and degradation. The BCR(KEAP1) complex also targets BPTF and PGAM5 for ubiquitination and degradation by the proteasome. In Sus scrofa (Pig), this protein is Kelch-like ECH-associated protein 1.